Here is a 543-residue protein sequence, read N- to C-terminus: Intermediate filament protein ifb-2 (543 aa).

Residues 1–10 (MSAVSYSMHR) show a composition bias toward polar residues. The segment at 1–27 (MSAVSYSMHRTTTTTSSSSHGGVSAGH) is disordered. The tract at residues 1-42 (MSAVSYSMHRTTTTTSSSSHGGVSAGHAAEEFVASAEREKQE) is head. Positions 39-388 (EKQEMQQLNS…KLVESEEGRF (350 aa)) constitute an IF rod domain. Residues 43 to 74 (MQQLNSRLEVYISRVRQLEDRNKELVIELDTL) form a coil 1A region. The linker 1 stretch occupies residues 75 to 88 (RGSLGNDIGQIKFK). Residues 89–223 (FNDSLVKVRR…RIHSQEITEL (135 aa)) are coil 1B. A linker 12 region spans residues 224 to 240 (RTLLAQAPADTREFFKN). The interval 241–387 (ELALAIREIK…RKLVESEEGR (147 aa)) is coil 2. Residues 388-542 (FTHVGQGVVV…SHIQTTVASS (155 aa)) are tail. An LTD domain is found at 420–538 (TRSSFKRHAK…IEKASHIQTT (119 aa)).

It belongs to the intermediate filament family. Expression is restricted to a discrete circumferential subapical layer within the intestinal terminal web (known as the 'endotube'); this layer joins directly to the apical junction complexes that connect adjacent gut cells.

It localises to the cytoplasm. Cytoplasmic intermediate filaments provide mechanical strength to cells. Not essential protein. Component of the terminal web (organelle-depleted, intermediate filament-rich layer of cytoplasm that underlies the apical microvilli of polarized epithelial cells) in embryonic through to adult gut cells. Correct localization of filaments requires let-413. The chain is Intermediate filament protein ifb-2 (ifb-2) from Caenorhabditis elegans.